A 274-amino-acid chain; its full sequence is tRNA (guanine-N(7)-)-methyltransferase (274 aa).

The disordered stretch occupies residues 16-40; the sequence is ASASRGAATGSRGVAPAVPRGGAPA. 4 residues coordinate S-adenosyl-L-methionine: Glu-106, Glu-131, Asp-158, and Asp-181. The active site involves Asp-181. Residues Lys-185, Asp-217, and 252 to 255 each bind substrate; that span reads TKFE.

It belongs to the class I-like SAM-binding methyltransferase superfamily. TrmB family.

It carries out the reaction guanosine(46) in tRNA + S-adenosyl-L-methionine = N(7)-methylguanosine(46) in tRNA + S-adenosyl-L-homocysteine. It functions in the pathway tRNA modification; N(7)-methylguanine-tRNA biosynthesis. Functionally, catalyzes the formation of N(7)-methylguanine at position 46 (m7G46) in tRNA. The protein is tRNA (guanine-N(7)-)-methyltransferase of Verminephrobacter eiseniae (strain EF01-2).